The following is a 207-amino-acid chain: Protein Nef (207 aa).

Glycine 2 carries the N-myristoyl glycine; by host lipid modification. Position 6 is a phosphoserine; by host (serine 6). The acidic; interacts with host PACS1 and PACS2; stabilizes the interaction of NEF/MHC-I with host AP1M1; necessary for MHC-I internalization stretch occupies residues 62-66; that stretch reads EEDSD. Residues 70–79 form an SH3-binding; interaction with Src family tyrosine kinases region; sequence PVRPQVPLRP. The PxxP; stabilizes the interaction of NEF/MHC-I with host AP1M1; necessary for MHC-I internalization signature appears at 73 to 76; that stretch reads PQVP. The segment at 109–125 is mediates dimerization, Nef-PTE1 interaction; that stretch reads DILDLWVYNTQGFFPDW. The segment at 149-181 is binding to ATP6V1H; it reads MDPAEIEEANKGENISLLHPICQHGMEDEDREV. The short motif at 165-166 is the Dileucine internalization motif; necessary for CD4 internalization element; the sequence is LL. The Diacidic; necessary for CD4 internalization motif lies at 175–176; sequence ED.

Belongs to the lentivirus primate group Nef protein family. Monomer; cytosolic form. Homodimer; membrane bound form. Interacts with Nef associated p21-activated kinase (PAK2); this interaction activates PAK2. Associates with the Nef-MHC-I-AP1 complex; this complex is required for MHC-I internalization. Interacts (via C-terminus) with host PI3-kinase. Interacts with host PACS1; this interaction seems to be weak. Interacts with host PACS2. Interacts with host LCK and MAPK3; these interactions inhibit the kinase activity of the latter. Interacts with host ATP6V1H; this interaction may play a role in CD4 endocytosis. Associates with the CD4-Nef-AP2 complex; this complex is required for CD4 internalization. Interacts with host AP2 subunit alpha and AP2 subunit sigma2. Interacts with TCR-zeta chain; this interaction up-regulates the Fas ligand (FasL) surface expression. Interacts with host HCK, LYN, and SRC; these interactions activate the Src family kinases. Interacts with MAP3K5; this interaction inhibits the Fas and TNFR-mediated death signals. Interacts with beta-COP and PTE1. Interacts with human RACK1; this increases Nef phosphorylation by PKC. Interacts with TP53; this interaction decreases the half-life of TP53, protecting the infected cell against p53-mediated apoptosis. In terms of processing, the virion-associated Nef proteins are cleaved by the viral protease to release the soluble C-terminal core protein. Nef is probably cleaved concomitantly with viral structural proteins on maturation of virus particles. Post-translationally, myristoylated. Phosphorylated on serine residues, probably by host PKCdelta and theta.

It is found in the host cell membrane. The protein localises to the virion. It localises to the secreted. The protein resides in the host Golgi apparatus membrane. Its function is as follows. Factor of infectivity and pathogenicity, required for optimal virus replication. Alters numerous pathways of T-lymphocyte function and down-regulates immunity surface molecules in order to evade host defense and increase viral infectivity. Alters the functionality of other immunity cells, like dendritic cells, monocytes/macrophages and NK cells. In infected CD4(+) T-lymphocytes, down-regulates the surface MHC-I, mature MHC-II, CD4, CD28, CCR5 and CXCR4 molecules. Mediates internalization and degradation of host CD4 through the interaction of with the cytoplasmic tail of CD4, the recruitment of AP-2 (clathrin adapter protein complex 2), internalization through clathrin coated pits, and subsequent transport to endosomes and lysosomes for degradation. Diverts host MHC-I molecules to the trans-Golgi network-associated endosomal compartments by an endocytic pathway to finally target them for degradation. MHC-I down-regulation may involve AP-1 (clathrin adapter protein complex 1) or possibly Src family kinase-ZAP70/Syk-PI3K cascade recruited by PACS2. In consequence infected cells are masked for immune recognition by cytotoxic T-lymphocytes. Decreasing the number of immune receptors also prevents reinfection by more HIV particles (superinfection). Down-regulates host SERINC3 and SERINC5 thereby excluding these proteins from the viral particles. Virion infectivity is drastically higher when SERINC3 or SERINC5 are excluded from the viral envelope, because these host antiviral proteins impair the membrane fusion event necessary for subsequent virion penetration. Functionally, bypasses host T-cell signaling by inducing a transcriptional program nearly identical to that of anti-CD3 cell activation. Interaction with TCR-zeta chain up-regulates the Fas ligand (FasL). Increasing surface FasL molecules and decreasing surface MHC-I molecules on infected CD4(+) cells send attacking cytotoxic CD8+ T-lymphocytes into apoptosis. In terms of biological role, plays a role in optimizing the host cell environment for viral replication without causing cell death by apoptosis. Protects the infected cells from apoptosis in order to keep them alive until the next virus generation is ready to strike. Inhibits the Fas and TNFR-mediated death signals by blocking MAP3K5/ASK1. Decreases the half-life of TP53, protecting the infected cell against p53-mediated apoptosis. Inhibits the apoptotic signals regulated by the Bcl-2 family proteins through the formation of a Nef/PI3-kinase/PAK2 complex that leads to activation of PAK2 and induces phosphorylation of host BAD. Its function is as follows. Extracellular Nef protein targets CD4(+) T-lymphocytes for apoptosis by interacting with CXCR4 surface receptors. This is Protein Nef from Homo sapiens (Human).